The sequence spans 522 residues: Protein GDS1 (522 aa).

4 disordered regions span residues 56–88 (ALDD…PKKD), 222–268 (QQLE…SSNS), 300–391 (LSPS…SHNA), and 433–489 (STQT…SRNE). A compositionally biased stretch (polar residues) spans 62–73 (LAGSSFSSSQEI). Residues 74–88 (KATKPKKDFGAPKKD) show a composition bias toward basic and acidic residues. Polar residues-rich tracts occupy residues 222 to 236 (QQLE…FNSN), 244 to 260 (SSNQ…SMTD), 300 to 314 (LSPS…LLTP), and 355 to 366 (SQSLSVLSTPKK). Residues 368–378 (SSASLSTFASS) are compositionally biased toward low complexity. Over residues 379–391 (KNISPDSSLSHNA) the composition is skewed to polar residues. Residues 439 to 467 (ESSSESSQYNSSSSSPVNSAAASSAESLS) are compositionally biased toward low complexity. Residues 468-489 (DINSSQDNGRESNPSSQESRNE) are compositionally biased toward polar residues.

In terms of biological role, involved in nuclear control of mitochondria. This is Protein GDS1 (GDS1) from Saccharomyces cerevisiae (strain ATCC 204508 / S288c) (Baker's yeast).